A 639-amino-acid polypeptide reads, in one-letter code: Poly(A)-specific ribonuclease PARN (639 aa).

The a divalent metal cation site is built by aspartate 28 and glutamate 30. A phosphoserine mark is found at serine 163 and serine 167. An R3H domain is found at 178-245 (KKFIDQVVEK…ERYIVISKVD (68 aa)). Lysine 220 bears the N6-acetyllysine mark. Aspartate 292 and aspartate 382 together coordinate a divalent metal cation. At lysine 499 the chain carries N6-acetyllysine. At serine 530 the chain carries Phosphoserine. Serine 557 bears the Phosphoserine; by MAPKAPK2 mark. A disordered region spans residues 560 to 639 (APSTVGKRNL…ATLFEVPDTW (80 aa)). Phosphoserine occurs at positions 583 and 587. Positions 606-615 (KKAKKLKRMK) are enriched in basic residues. Serine 619, serine 623, and serine 628 each carry phosphoserine. Threonine 631 is subject to Phosphothreonine.

The protein belongs to the CAF1 family. As to quaternary structure, homodimer. Found in a mRNA decay complex with RENT1, RENT2 and RENT3B. Interacts with KHSRP. Interacts with CELF1/CUGBP1. Interacts with ZC3HAV1 in an RNA-independent manner. Interacts with DHX36. Mg(2+) is required as a cofactor. In terms of processing, phosphorylation by MAPKAPK2, preventing GADD45A mRNA degradation after genotoxic stress. In terms of tissue distribution, ubiquitous.

It is found in the nucleus. The protein resides in the cytoplasm. It localises to the nucleolus. It catalyses the reaction Exonucleolytic cleavage of poly(A) to 5'-AMP.. Its function is as follows. 3'-exoribonuclease that has a preference for poly(A) tails of mRNAs, thereby efficiently degrading poly(A) tails. Exonucleolytic degradation of the poly(A) tail is often the first step in the decay of eukaryotic mRNAs and is also used to silence certain maternal mRNAs translationally during oocyte maturation and early embryonic development. Interacts with both the 3'-end poly(A) tail and the 5'-end cap structure during degradation, the interaction with the cap structure being required for an efficient degradation of poly(A) tails. Involved in nonsense-mediated mRNA decay, a critical process of selective degradation of mRNAs that contain premature stop codons. Also involved in degradation of inherently unstable mRNAs that contain AU-rich elements (AREs) in their 3'-UTR, possibly via its interaction with KHSRP. Probably mediates the removal of poly(A) tails of AREs mRNAs, which constitutes the first step of destabilization. Also able to recognize and trim poly(A) tails of microRNAs such as MIR21 and H/ACA box snoRNAs (small nucleolar RNAs) leading to microRNAs degradation or snoRNA increased stability. This chain is Poly(A)-specific ribonuclease PARN (PARN), found in Homo sapiens (Human).